Here is a 334-residue protein sequence, read N- to C-terminus: Serine/threonine-protein kinase SAPK3 (334 aa).

Residues Y5–F261 form the Protein kinase domain. Residues L11–A19 and K34 each bind ATP. Catalysis depends on D124, which acts as the Proton acceptor.

Belongs to the protein kinase superfamily. Ser/Thr protein kinase family. Post-translationally, autophosphorylated in presence of Ca(2+). In terms of tissue distribution, expressed in leaves and maturing seeds, but not in roots and stems of field-grown plants.

Its subcellular location is the cytoplasm. The protein localises to the nucleus. The catalysed reaction is L-seryl-[protein] + ATP = O-phospho-L-seryl-[protein] + ADP + H(+). It catalyses the reaction L-threonyl-[protein] + ATP = O-phospho-L-threonyl-[protein] + ADP + H(+). Activated by phosphorylation. In terms of biological role, may play a role in signal transduction of hyperosmotic response. This is Serine/threonine-protein kinase SAPK3 (SAPK3) from Oryza sativa subsp. indica (Rice).